The primary structure comprises 439 residues: CBL-interacting serine/threonine-protein kinase 20 (439 aa).

The Protein kinase domain occupies 12 to 266 (YELGRLLGQG…IEKIMENSWF (255 aa)). ATP contacts are provided by residues 18-26 (LGQGTFAKV) and Lys41. The active-site Proton acceptor is the Asp134. Positions 152-181 (DFGLSALRESKQQDGLLHTTCGTPAYVAPE) are activation loop. The residue at position 156 (Ser156) is a Phosphoserine. Phosphothreonine is present on Thr170. The NAF domain occupies 297 to 322 (VKPMSYNAFDLISSLSQGFDLSGLFE). The PPI stretch occupies residues 326–356 (RSESKFTTKKDAKEIVSKFEEIATSSERFNL).

It belongs to the protein kinase superfamily. CAMK Ser/Thr protein kinase family. SNF1 subfamily. The cofactor is Mn(2+). Autophosphorylated. Confined to mature leaves.

The enzyme catalyses L-seryl-[protein] + ATP = O-phospho-L-seryl-[protein] + ADP + H(+). It catalyses the reaction L-threonyl-[protein] + ATP = O-phospho-L-threonyl-[protein] + ADP + H(+). Its function is as follows. CIPK serine-threonine protein kinases interact with CBL proteins. Binding of a CBL protein to the regulatory NAF domain of CIPK protein lead to the activation of the kinase in a calcium-dependent manner. Required for the abscisic acid-mediated (ABA) signaling pathway involved in seed germination and growth elongation inhibition. The sequence is that of CBL-interacting serine/threonine-protein kinase 20 (CIPK20) from Arabidopsis thaliana (Mouse-ear cress).